The chain runs to 291 residues: MSPTQPNPAAALSGSAEPQTKRIYISNLDFSTTEEELEQFLQEFRVVSVLIPSQTVRGFRNSTVRPLGIGYADFASAADALQAVENLNGKQLRERTLKIKMYVPYSPRARAERRKEKRKVPAPQAEENPDAAPQDAQQPQPPAPAEEPTSKDTVYCAYLPSKVTDVELREFFADYQPQDIYVYRTNGSRRKVYFHRRFTAALVTLGGEAELANAIETLGTRRLMGKKITLRPARLSKVEEVQHAAARKLELEQIQQQTRQIAEHAMAMEEHRQQEAEIPAAETPDDVAATA.

An RRM 1 domain is found at 21–104; sequence KRIYISNLDF…RTLKIKMYVP (84 aa). The segment at 109–151 is disordered; it reads ARAERRKEKRKVPAPQAEENPDAAPQDAQQPQPPAPAEEPTSK. Positions 152-235 constitute an RRM 2 domain; the sequence is DTVYCAYLPS…KKITLRPARL (84 aa). The tract at residues 271–291 is disordered; it reads HRQQEAEIPAAETPDDVAATA.

This sequence belongs to the RRT5 family.

In terms of biological role, may be involved in the modulation of rDNA transcription. This is Regulator of rDNA transcription protein 5 (RRT5) from Lachancea thermotolerans (strain ATCC 56472 / CBS 6340 / NRRL Y-8284) (Yeast).